The chain runs to 584 residues: Methionine--tRNA ligase (584 aa).

Positions 12–22 match the 'HIGH' region motif; sequence PYANGDLHLGH. 4 residues coordinate Zn(2+): Cys144, Cys147, Cys157, and Cys160. Positions 334-338 match the 'KMSKS' region motif; the sequence is QFSTS. An ATP-binding site is contributed by Thr337. The tract at residues 541–563 is disordered; the sequence is EGRDRWAPSELEAGRPLPPPQPL.

This sequence belongs to the class-I aminoacyl-tRNA synthetase family. MetG type 1 subfamily. As to quaternary structure, monomer. Zn(2+) serves as cofactor.

Its subcellular location is the cytoplasm. It carries out the reaction tRNA(Met) + L-methionine + ATP = L-methionyl-tRNA(Met) + AMP + diphosphate. Is required not only for elongation of protein synthesis but also for the initiation of all mRNA translation through initiator tRNA(fMet) aminoacylation. The sequence is that of Methionine--tRNA ligase from Thermomicrobium roseum (strain ATCC 27502 / DSM 5159 / P-2).